The following is a 273-amino-acid chain: ABC transporter glutamine-binding protein GlnH (273 aa).

The signal sequence occupies residues methionine 1–alanine 20. Cysteine 21 is lipidated: N-palmitoyl cysteine. A lipid anchor (S-diacylglycerol cysteine) is attached at cysteine 21.

The protein belongs to the bacterial solute-binding protein 3 family. The complex is composed of two ATP-binding proteins (GlnQ), two transmembrane proteins (GlnM and GlnP) and a solute-binding protein (GlnH).

Its subcellular location is the cell membrane. In terms of biological role, part of the ABC transporter complex GlnHMPQ involved in glutamine transport. This is ABC transporter glutamine-binding protein GlnH (glnH) from Bacillus subtilis (strain 168).